A 122-amino-acid chain; its full sequence is MARIAGVNIPTNKRVVIALQYIHGIGPKKAEEITEKVGIPAERRVNQLTDAEVLQIREAIDRDYIVEGDLRREVAMNIKRLMDLGCYRGLRHRRNLPVRGQRTHTNARTRKGKAKPIAGKKK.

Residues 95 to 122 (NLPVRGQRTHTNARTRKGKAKPIAGKKK) are disordered.

It belongs to the universal ribosomal protein uS13 family. In terms of assembly, part of the 30S ribosomal subunit. Forms a loose heterodimer with protein S19. Forms two bridges to the 50S subunit in the 70S ribosome.

Functionally, located at the top of the head of the 30S subunit, it contacts several helices of the 16S rRNA. In the 70S ribosome it contacts the 23S rRNA (bridge B1a) and protein L5 of the 50S subunit (bridge B1b), connecting the 2 subunits; these bridges are implicated in subunit movement. Contacts the tRNAs in the A and P-sites. In Methylobacterium nodulans (strain LMG 21967 / CNCM I-2342 / ORS 2060), this protein is Small ribosomal subunit protein uS13.